The primary structure comprises 69 residues: Large ribosomal subunit protein uL29 (69 aa).

The protein belongs to the universal ribosomal protein uL29 family.

In Sulfolobus acidocaldarius (strain ATCC 33909 / DSM 639 / JCM 8929 / NBRC 15157 / NCIMB 11770), this protein is Large ribosomal subunit protein uL29.